The chain runs to 457 residues: Cysteine--tRNA ligase (457 aa).

Cysteine 27 is a Zn(2+) binding site. Positions 29-39 (ITPQSEPHIGH) match the 'HIGH' region motif. Residues cysteine 207, histidine 232, and glutamate 236 each contribute to the Zn(2+) site. A 'KMSKS' region motif is present at residues 265-269 (KMSKS). Lysine 268 serves as a coordination point for ATP.

It belongs to the class-I aminoacyl-tRNA synthetase family. In terms of assembly, monomer. The cofactor is Zn(2+).

Its subcellular location is the cytoplasm. The catalysed reaction is tRNA(Cys) + L-cysteine + ATP = L-cysteinyl-tRNA(Cys) + AMP + diphosphate. This Dehalococcoides mccartyi (strain ATCC BAA-2100 / JCM 16839 / KCTC 5957 / BAV1) protein is Cysteine--tRNA ligase.